Consider the following 1198-residue polypeptide: DNA polymerase (1198 aa).

Disordered stretches follow at residues 1 to 87 (MALV…PRGT), 179 to 199 (LEQP…PNPP), and 904 to 930 (QLAL…PPSG). 2 stretches are compositionally biased toward low complexity: residues 30 to 40 (QQPTRAAPAPA) and 57 to 68 (APPTSGGSPASP).

It belongs to the DNA polymerase type-B family. Heterodimer with the terminal protein; this heterodimer binds to bp 9 to 18 of the genome. Forms a complex with viral pTP, DBP and hosts NFIA and POU2F1/OCT1 for initiation of replication.

Its subcellular location is the host nucleus. The catalysed reaction is DNA(n) + a 2'-deoxyribonucleoside 5'-triphosphate = DNA(n+1) + diphosphate. In terms of biological role, eukaryotic-type DNA polymerase involved in viral genomic replication. DNA synthesis is protein primed, and acts in a strand displacement replication. Assembles in complex with viral pTP, DBP, host NFIA and host POU2F1/OCT1 on viral origin of replication. The polymerase covalently transfers dCMP onto pTP, thereby initiating complementary strand synthesis. The sequence is that of DNA polymerase from Homo sapiens (Human).